A 190-amino-acid chain; its full sequence is MTLSSQHYLVITALGADRPGIVNTITRHVSSCGCNIEDSRLAMLGEEFTFIMLLSGSWNAITLIESTLPLKGAELDLLIVMKRTTARPRPPMPASVWVQVDVADSPHLIERFTALFDAHHMNIAELVSRTQPAENERAAQLHIQITAHSPASADAANIEQAFKALCTELNAQGSINVVNYSQHDEQDGVK.

ACT domains follow at residues 10–91 (VITA…PRPP) and 97–176 (WVQV…GSIN).

It is found in the cytoplasm. Its function is as follows. Negative transcriptional regulator of the glycine cleavage system operon (GCV). Does not autoregulate its own expression. It is not yet known how GcvR acts as a repressor. It does not seem to bind DNA. It could interact with GcvA and suppress its activatory activity. This chain is Glycine cleavage system transcriptional repressor (gcvR), found in Escherichia coli (strain K12).